A 605-amino-acid chain; its full sequence is Vicilin GC72-A (605 aa).

A signal peptide spans 1 to 23 (MVRNKSVFVVLLFSLFLSFGLLC). Disordered regions lie at residues 52–81 (TRGQ…EDPQ) and 157–181 (GERE…QRNN). A compositionally biased stretch (acidic residues) spans 166–175 (EEEEESDEGE). 2 consecutive Cupin type-1 domains span residues 183-341 (YYFH…EQLD) and 387-564 (FNLL…RLVD). Residues 465 to 485 (SSDWSSREEEEQEEQEVERRS) form a disordered region.

Belongs to the 7S seed storage protein family.

It localises to the vacuole. The protein resides in the aleurone grain. Seed storage protein. The protein is Vicilin GC72-A of Gossypium hirsutum (Upland cotton).